Reading from the N-terminus, the 420-residue chain is 2',3'-cyclic-nucleotide 3'-phosphodiesterase (420 aa).

Phosphoserine is present on serine 9. At tyrosine 110 the chain carries Phosphotyrosine. A phosphoserine mark is found at serine 169, serine 227, and serine 239. Histidine 250 acts as the Proton acceptor in catalysis. Substrate is bound at residue threonine 252. Histidine 329 serves as the catalytic Proton donor. A substrate-binding site is contributed by threonine 331. Residue serine 358 is modified to Phosphoserine. Position 417 is a cysteine methyl ester (cysteine 417). Residue cysteine 417 is the site of S-farnesyl cysteine attachment. The propeptide at 418–420 (TII) is removed in mature form.

The protein belongs to the 2H phosphoesterase superfamily. CNPase family. As to quaternary structure, exists as monomers and homodimers.

It is found in the membrane. The protein localises to the melanosome. It carries out the reaction a nucleoside 2',3'-cyclic phosphate + H2O = a nucleoside 2'-phosphate + H(+). In terms of biological role, catalyzes the formation of 2'-nucleotide products from 2',3'-cyclic substrates. May participate in RNA metabolism in the myelinating cell, CNP is the third most abundant protein in central nervous system myelin. In Mus musculus (Mouse), this protein is 2',3'-cyclic-nucleotide 3'-phosphodiesterase.